Here is a 215-residue protein sequence, read N- to C-terminus: 3-demethoxyubiquinol 3-hydroxylase (215 aa).

6 residues coordinate Fe cation: glutamate 64, glutamate 94, histidine 97, glutamate 146, glutamate 178, and histidine 181.

It belongs to the COQ7 family. Requires Fe cation as cofactor.

It is found in the cell membrane. The catalysed reaction is a 5-methoxy-2-methyl-3-(all-trans-polyprenyl)benzene-1,4-diol + AH2 + O2 = a 3-demethylubiquinol + A + H2O. The protein operates within cofactor biosynthesis; ubiquinone biosynthesis. Catalyzes the hydroxylation of 2-nonaprenyl-3-methyl-6-methoxy-1,4-benzoquinol during ubiquinone biosynthesis. This chain is 3-demethoxyubiquinol 3-hydroxylase, found in Azotobacter vinelandii (strain DJ / ATCC BAA-1303).